A 339-amino-acid polypeptide reads, in one-letter code: Ketol-acid reductoisomerase (NADP(+)) (339 aa).

The region spanning 1-182 (MRVYYDRDAD…GGGRSGIIET (182 aa)) is the KARI N-terminal Rossmann domain. Residues 24 to 27 (YGSQ), Lys48, Ser51, Thr53, and 83 to 86 (DELQ) each bind NADP(+). The active site involves His108. Residue Gly134 participates in NADP(+) binding. Residues 183–328 (NFKEECETDL…AKLRAMMPWI (146 aa)) form the KARI C-terminal knotted domain. 4 residues coordinate Mg(2+): Asp191, Glu195, Glu227, and Glu231. Ser252 contributes to the substrate binding site.

Belongs to the ketol-acid reductoisomerase family. The cofactor is Mg(2+).

The catalysed reaction is (2R)-2,3-dihydroxy-3-methylbutanoate + NADP(+) = (2S)-2-acetolactate + NADPH + H(+). The enzyme catalyses (2R,3R)-2,3-dihydroxy-3-methylpentanoate + NADP(+) = (S)-2-ethyl-2-hydroxy-3-oxobutanoate + NADPH + H(+). It functions in the pathway amino-acid biosynthesis; L-isoleucine biosynthesis; L-isoleucine from 2-oxobutanoate: step 2/4. It participates in amino-acid biosynthesis; L-valine biosynthesis; L-valine from pyruvate: step 2/4. Functionally, involved in the biosynthesis of branched-chain amino acids (BCAA). Catalyzes an alkyl-migration followed by a ketol-acid reduction of (S)-2-acetolactate (S2AL) to yield (R)-2,3-dihydroxy-isovalerate. In the isomerase reaction, S2AL is rearranged via a Mg-dependent methyl migration to produce 3-hydroxy-3-methyl-2-ketobutyrate (HMKB). In the reductase reaction, this 2-ketoacid undergoes a metal-dependent reduction by NADPH to yield (R)-2,3-dihydroxy-isovalerate. This is Ketol-acid reductoisomerase (NADP(+)) from Rhizobium meliloti (strain 1021) (Ensifer meliloti).